We begin with the raw amino-acid sequence, 365 residues long: Phospho-N-acetylmuramoyl-pentapeptide-transferase (365 aa).

The next 10 membrane-spanning stretches (helical) occupy residues 3–23 (HIIIGGAVSFIIAILFTPILI), 54–74 (GIAIIVAIVGGYFLAHLASVF), 81–101 (PTASGLLVLGLTVGMGFLGFL), 119–139 (GKLLGQAVLAIGFGVLCLLFL), 162–182 (IAIGGGIIGTLIFLLFIYILV), 198–218 (LAAGTTAIVMAAYSIMTFWQF), 239–259 (LSILAACGLGACLGFLWWNAA), 263–283 (IFMGDTGSLALGGLVAGLSVT), 289–309 (LMIVIGALFVAETISVVIQVV), and 342–362 (FWLLTAMFAVAGVSMFYADWL).

Belongs to the glycosyltransferase 4 family. MraY subfamily. Mg(2+) serves as cofactor.

It localises to the cell membrane. The enzyme catalyses UDP-N-acetyl-alpha-D-muramoyl-L-alanyl-gamma-D-glutamyl-meso-2,6-diaminopimeloyl-D-alanyl-D-alanine + di-trans,octa-cis-undecaprenyl phosphate = di-trans,octa-cis-undecaprenyl diphospho-N-acetyl-alpha-D-muramoyl-L-alanyl-D-glutamyl-meso-2,6-diaminopimeloyl-D-alanyl-D-alanine + UMP. Its pathway is cell wall biogenesis; peptidoglycan biosynthesis. In terms of biological role, catalyzes the initial step of the lipid cycle reactions in the biosynthesis of the cell wall peptidoglycan: transfers peptidoglycan precursor phospho-MurNAc-pentapeptide from UDP-MurNAc-pentapeptide onto the lipid carrier undecaprenyl phosphate, yielding undecaprenyl-pyrophosphoryl-MurNAc-pentapeptide, known as lipid I. This Corynebacterium kroppenstedtii (strain DSM 44385 / JCM 11950 / CIP 105744 / CCUG 35717) protein is Phospho-N-acetylmuramoyl-pentapeptide-transferase.